Here is a 1390-residue protein sequence, read N- to C-terminus: MKAPAVLAPGILVLLFTLVQRSNGECKEALAKSEMNVNMKYQLPNFTAETPIQNVILHEHHIFLGATNYIYVLNEEDLQKVAEYKTGPVLEHPDCFPCQDCSSKANLSGGVWKDNINMALVVDTYYDDQLISCGSVNRGTCQRHVFPHNHTADIQSEVHCIFSPQIEEPSQCPDCVVSALGAKVLSSVKDRFINFFVGNTINSSYFPDHPLHSISVRRLKETKDGFMFLTDQSYIDVLPEFRDSYPIKYVHAFESNNFIYFLTVQRETLDAQTFHTRIIRFCSINSGLHSYMEMPLECILTEKRKKRSTKKEVFNILQAAYVSKPGAQLARQIGASLNDDILFGVFAQSKPDSAEPMDRSAMCAFPIKYVNDFFNKIVNKNNVRCLQHFYGPNHEHCFNRTLLRNSSGCEARRDEYRTEFTTALQRVDLFMGQFSEVLLTSISTFIKGDLTIANLGTSEGRFMQVVVSRSGPSTPHVNFLLDSHPVSPEVIVEHTLNQNGYTLVITGKKITKIPLNGLGCRHFQSCSQCLSAPPFVQCGWCHDKCVRSEECLSGTWTQQICLPAIYKVFPNSAPLEGGTRLTICGWDFGFRRNNKFDLKKTRVLLGNESCTLTLSESTMNTLKCTVGPAMNKHFNMSIIISNGHGTTQYSTFSYVDPVITSISPKYGPMAGGTLLTLTGNYLNSGNSRHISIGGKTCTLKSVSNSILECYTPAQTISTEFAVKLKIDLANRETSIFSYREDPIVYEIHPTKSFISGGSTITGVGKNLNSVSVPRMVINVHEAGRNFTVACQHRSNSEIICCTTPSLQQLNLQLPLKTKAFFMLDGILSKYFDLIYVHNPVFKPFEKPVMISMGNENVLEIKGNDIDPEAVKGEVLKVGNKSCENIHLHSEAVLCTVPNDLLKLNSELNIEWKQAISSTVLGKVIVQPDQNFTGLIAGVVSISTALLLLLGFFLWLKKRKQIKDLGSELVRYDARVHTPHLDRLVSARSVSPTTEMVSNESVDYRATFPEDQFPNSSQNGSCRQVQYPLTDMSPILTSGDSDISSPLLQNTVHIDLSALNPELVQAVQHVVIGPSSLIVHFNEVIGRGHFGCVYHGTLLDNDGKKIHCAVKSLNRITDIGEVSQFLTEGIIMKDFSHPNVLSLLGICLRSEGSPLVVLPYMKHGDLRNFIRNETHNPTVKDLIGFGLQVAKGMKYLASKKFVHRDLAARNCMLDEKFTVKVADFGLARDMYDKEYYSVHNKTGAKLPVKWMALESLQTQKFTTKSDVWSFGVLLWELMTRGAPPYPDVNTFDITVYLLQGRRLLQPEYCPDPLYEVMLKCWHPKAEMRPSFSELVSRISAIFSTFIGEHYVHVNATYVNVKCVAPYPSLLSSEDNADDEVDTRPASFWETS.

Positions 1 to 24 (MKAPAVLAPGILVLLFTLVQRSNG) are cleaved as a signal peptide. Residues 25 to 932 (ECKEALAKSE…VIVQPDQNFT (908 aa)) lie on the Extracellular side of the membrane. The Sema domain maps to 27–515 (KEALAKSEMN…TGKKITKIPL (489 aa)). A glycan (N-linked (GlcNAc...) asparagine) is linked at asparagine 45. 4 disulfide bridges follow: cysteine 95/cysteine 101, cysteine 98/cysteine 160, cysteine 133/cysteine 141, and cysteine 172/cysteine 175. Asparagine 106 carries N-linked (GlcNAc...) asparagine glycosylation. An N-linked (GlcNAc...) asparagine glycan is attached at asparagine 149. Asparagine 202 carries an N-linked (GlcNAc...) asparagine glycan. 2 cysteine pairs are disulfide-bonded: cysteine 298–cysteine 363 and cysteine 385–cysteine 397. N-linked (GlcNAc...) asparagine glycans are attached at residues asparagine 399 and asparagine 405. 4 disulfides stabilise this stretch: cysteine 520/cysteine 538, cysteine 526/cysteine 561, cysteine 529/cysteine 545, and cysteine 541/cysteine 551. IPT/TIG domains are found at residues 563-655 (PAIY…FSYV), 657-739 (PVIT…FSYR), and 742-836 (PIVY…LIYV). A glycan (O-linked (Man) threonine) is linked at threonine 582. N-linked (GlcNAc...) asparagine glycosylation occurs at asparagine 607. Cysteine 610 and cysteine 624 form a disulfide bridge. An N-linked (GlcNAc...) asparagine glycan is attached at asparagine 635. Threonine 676 carries O-linked (Man) threonine glycosylation. The cysteines at positions 697 and 709 are disulfide-linked. Threonine 761 is a glycosylation site (O-linked (Man) threonine). 3 N-linked (GlcNAc...) asparagine glycosylation sites follow: asparagine 785, asparagine 879, and asparagine 930. The chain crosses the membrane as a helical span at residues 933–955 (GLIAGVVSISTALLLLLGFFLWL). Over 956–1390 (KKRKQIKDLG…TRPASFWETS (435 aa)) the chain is Cytoplasmic. Serine 966 carries the phosphoserine modification. Threonine 977 is subject to Phosphothreonine. A phosphoserine mark is found at serine 990, serine 997, and serine 1000. Position 1003 is a phosphotyrosine (tyrosine 1003). The Protein kinase domain occupies 1078–1345 (VHFNEVIGRG…RISAIFSTFI (268 aa)). ATP is bound by residues 1084–1092 (IGRGHFGCV) and lysine 1110. Residue aspartate 1204 is the Proton acceptor of the active site. The segment at 1212-1390 (LDEKFTVKVA…TRPASFWETS (179 aa)) is interaction with RANBP9. A Phosphotyrosine modification is found at tyrosine 1230. Tyrosine 1234 and tyrosine 1235 each carry phosphotyrosine; by autocatalysis. Threonine 1289 bears the Phosphothreonine mark. An interaction with MUC20 region spans residues 1320 to 1359 (WHPKAEMRPSFSELVSRISAIFSTFIGEHYVHVNATYVNV). 2 positions are modified to phosphotyrosine; by autocatalysis: tyrosine 1349 and tyrosine 1356. At tyrosine 1365 the chain carries Phosphotyrosine.

It belongs to the protein kinase superfamily. Tyr protein kinase family. As to quaternary structure, heterodimer made of an alpha chain (50 kDa) and a beta chain (145 kDa) which are disulfide linked. Binds PLXNB1. Interacts when phosphorylated with downstream effectors including STAT3, PIK3R1, SRC, PCLG1, GRB2 and GAB1. Interacts with SPSB1, SPSB2 and SPSB4. Interacts with INPP5D/SHIP1. When phosphorylated at Tyr-1356, interacts with INPPL1/SHIP2. Interacts with RANBP9 and RANBP10, as well as SPSB1, SPSB2, SPSB3 and SPSB4. SPSB1 binding occurs in the presence and in the absence of HGF, however HGF treatment has a positive effect on this interaction. Interacts with MUC20; prevents interaction with GRB2 and suppresses hepatocyte growth factor-induced cell proliferation. Interacts with GRB10. Interacts with PTPN1 and PTPN2. Interacts with LECT2; this interaction may have an antagonistic effect on receptor activation. Interacts with HSP90AA1 and HSP90AB1; the interaction suppresses MET kinase activity. Interacts with tensin TNS3. Interacts (when phosphorylated) with tensin TNS4 (via SH2 domain); the interaction increases MET protein stability by inhibiting MET endocytosis and subsequent lysosomal degradation. (Microbial infection) Interacts via extracytoplasmic residues 25-656 with L.monocytogenes InlB; MET can bind HGF, its endogenous ligand, and InlB simultaneously. InlB probably dimerizes upon binding to MET, which encourages subsequent dimerization of MET. Post-translationally, autophosphorylated in response to ligand binding on Tyr-1234 and Tyr-1235 in the kinase domain leading to further phosphorylation of Tyr-1349 and Tyr-1356 in the C-terminal multifunctional docking site. Dephosphorylated by PTPRJ at Tyr-1349 and Tyr-1365. Dephosphorylated by PTPN1 and PTPN2. Ubiquitinated. Ubiquitination by CBL regulates MET endocytosis, resulting in decreasing plasma membrane receptor abundance, and in endosomal degradation and/or recycling of internalized receptors. In terms of processing, O-mannosylation of IPT/TIG domains by TMEM260 is required for protein maturation. O-mannosylated residues are composed of single mannose glycans that are not elongated or modified. Post-translationally, (Microbial infection) Tyrosine phosphorylation is stimulated by L.monocytogenes InlB. Tyrosine phosphorylation is maximal 10-20 minutes after treatment with InlB and disappears by 60 minutes. The phosphorylated residues were not identified. In terms of tissue distribution, expressed in normal hepatocytes as well as in epithelial cells lining the stomach, the small and the large intestine. Found also in basal keratinocytes of esophagus and skin. High levels are found in liver, gastrointestinal tract, thyroid and kidney. Also present in the brain. Expressed in metaphyseal bone (at protein level).

Its subcellular location is the membrane. The protein localises to the secreted. The enzyme catalyses L-tyrosyl-[protein] + ATP = O-phospho-L-tyrosyl-[protein] + ADP + H(+). Its activity is regulated as follows. In its inactive state, the C-terminal tail interacts with the catalytic domain and inhibits the kinase activity. Upon ligand binding, the C-terminal tail is displaced and becomes phosphorylated, thus increasing the kinase activity. In terms of biological role, receptor tyrosine kinase that transduces signals from the extracellular matrix into the cytoplasm by binding to hepatocyte growth factor/HGF ligand. Regulates many physiological processes including proliferation, scattering, morphogenesis and survival. Ligand binding at the cell surface induces autophosphorylation of MET on its intracellular domain that provides docking sites for downstream signaling molecules. Following activation by ligand, interacts with the PI3-kinase subunit PIK3R1, PLCG1, SRC, GRB2, STAT3 or the adapter GAB1. Recruitment of these downstream effectors by MET leads to the activation of several signaling cascades including the RAS-ERK, PI3 kinase-AKT, or PLCgamma-PKC. The RAS-ERK activation is associated with the morphogenetic effects while PI3K/AKT coordinates prosurvival effects. During embryonic development, MET signaling plays a role in gastrulation, development and migration of neuronal precursors, angiogenesis and kidney formation. During skeletal muscle development, it is crucial for the migration of muscle progenitor cells and for the proliferation of secondary myoblasts. In adults, participates in wound healing as well as organ regeneration and tissue remodeling. Also promotes differentiation and proliferation of hematopoietic cells. May regulate cortical bone osteogenesis. Its function is as follows. (Microbial infection) Acts as a receptor for Listeria monocytogenes internalin InlB, mediating entry of the pathogen into cells. In Homo sapiens (Human), this protein is Hepatocyte growth factor receptor (MET).